The chain runs to 442 residues: UDP-N-acetylmuramoylalanine--D-glutamate ligase (442 aa).

Belongs to the MurCDEF family.

The protein resides in the cytoplasm. The enzyme catalyses UDP-N-acetyl-alpha-D-muramoyl-L-alanine + D-glutamate + ATP = UDP-N-acetyl-alpha-D-muramoyl-L-alanyl-D-glutamate + ADP + phosphate + H(+). The protein operates within cell wall biogenesis; peptidoglycan biosynthesis. Cell wall formation. Catalyzes the addition of glutamate to the nucleotide precursor UDP-N-acetylmuramoyl-L-alanine (UMA). The protein is UDP-N-acetylmuramoylalanine--D-glutamate ligase of Buchnera aphidicola subsp. Baizongia pistaciae (strain Bp).